The primary structure comprises 79 residues: Putative sulfur carrier protein TM_0983 (79 aa).

Catalysis depends on C17, which acts as the Cysteine persulfide intermediate.

The protein belongs to the sulfur carrier protein TusA family.

This is Putative sulfur carrier protein TM_0983 from Thermotoga maritima (strain ATCC 43589 / DSM 3109 / JCM 10099 / NBRC 100826 / MSB8).